A 278-amino-acid polypeptide reads, in one-letter code: Adenosylcobinamide-GDP ribazoletransferase (278 aa).

A run of 7 helical transmembrane segments spans residues 35–55, 62–82, 116–136, 141–161, 185–205, 222–242, and 257–277; these read VVGI…NFIL, AVLP…TGAL, GALA…SLTI, AAVY…VVSC, LIVA…MPFI, LIIV…SKLI, and LLEI…TFFI.

It belongs to the CobS family. Mg(2+) serves as cofactor.

It localises to the cell inner membrane. The enzyme catalyses alpha-ribazole + adenosylcob(III)inamide-GDP = adenosylcob(III)alamin + GMP + H(+). The catalysed reaction is alpha-ribazole 5'-phosphate + adenosylcob(III)inamide-GDP = adenosylcob(III)alamin 5'-phosphate + GMP + H(+). It functions in the pathway cofactor biosynthesis; adenosylcobalamin biosynthesis; adenosylcobalamin from cob(II)yrinate a,c-diamide: step 7/7. In terms of biological role, joins adenosylcobinamide-GDP and alpha-ribazole to generate adenosylcobalamin (Ado-cobalamin). Also synthesizes adenosylcobalamin 5'-phosphate from adenosylcobinamide-GDP and alpha-ribazole 5'-phosphate. The polypeptide is Adenosylcobinamide-GDP ribazoletransferase (Fusobacterium nucleatum subsp. nucleatum (strain ATCC 25586 / DSM 15643 / BCRC 10681 / CIP 101130 / JCM 8532 / KCTC 2640 / LMG 13131 / VPI 4355)).